Consider the following 626-residue polypeptide: MSTNQETRGFQSEVKQLLQLMIHSLYSNKEIFLRELISNASDAADKLRFKALSAPELYEGDGDLKVRISFDAEKGTLTISDNGIGMTREQVIDHLGTIAKSGTKEFLAALGQEQAKDSQLIGQFGVGFYSAFIVADKVTVKTRAAGEPIDRAVLWESAGEGEYSVADIEKRERGTEITLHLREEEKEFANEWRVREIIGKYSDHIGLPVEILAKEYDEEGKETGIKWEKINKAQALWTRSKGEISDEEYKEFYKHLSHDFADPLLWTHNKVEGNQEYTSLLYVPSKAPWDLFNREHKHGLKLYVQRVFIMDDAEQFMPNYLRFMRGLIDSNDLPLNVSREILQDNKVTAALRKALTKRSLQMLEKLAKDDEEKYLQFWKEFGLVLKEGPSEDFANKENIAKLLRFASSKNDSSEQTVSLEDYVARMKEGQKAIYYITADSYIAAKNSPHLELFNKKDIEVLLLSDRIDEWMLSYLTEFDGKQLQPITKADLDLGDLADKEQEEQKEQDKTFSSFIERVKTLLGERVKDVRLTHRLTDTPAVVSTDNDQMTTQMAKLFAAAGQPVPEVKYTFELNPEHHLVKKVADFADEDEFANWIELLLEQAMLAERGSLENPTAFIKRVNNLLG.

An a; substrate-binding region spans residues 1–339; the sequence is MSTNQETRGF…SNDLPLNVSR (339 aa). The segment at 340-555 is b; sequence EILQDNKVTA…NDQMTTQMAK (216 aa). Residues 556 to 626 form a c region; the sequence is LFAAAGQPVP…FIKRVNNLLG (71 aa).

Belongs to the heat shock protein 90 family. Homodimer.

The protein resides in the cytoplasm. Its function is as follows. Molecular chaperone. Has ATPase activity. The chain is Chaperone protein HtpG from Histophilus somni (strain 2336) (Haemophilus somnus).